The primary structure comprises 951 residues: Valine--tRNA ligase (951 aa).

A 'HIGH' region motif is present at residues 42–52 (PNVTGSLHMGH). Residues 554–558 (KMSKS) carry the 'KMSKS' region motif. Lysine 557 is a binding site for ATP. A coiled-coil region spans residues 882 to 944 (LINKDDELAR…AEAKAKLIEQ (63 aa)).

It belongs to the class-I aminoacyl-tRNA synthetase family. ValS type 1 subfamily. As to quaternary structure, monomer.

The protein localises to the cytoplasm. The catalysed reaction is tRNA(Val) + L-valine + ATP = L-valyl-tRNA(Val) + AMP + diphosphate. Functionally, catalyzes the attachment of valine to tRNA(Val). As ValRS can inadvertently accommodate and process structurally similar amino acids such as threonine, to avoid such errors, it has a 'posttransfer' editing activity that hydrolyzes mischarged Thr-tRNA(Val) in a tRNA-dependent manner. The chain is Valine--tRNA ligase from Salmonella choleraesuis (strain SC-B67).